The following is a 205-amino-acid chain: LexA repressor (205 aa).

Positions 28–48 (VREIGEAVGLASSSTVHGHLA) form a DNA-binding region, H-T-H motif. Active-site for autocatalytic cleavage activity residues include Ser-127 and Lys-165.

Belongs to the peptidase S24 family. Homodimer. Following treatment with mitomycin C protein levels begin to decrease after a 5-min lag and do not return to their original levels for at least 90 minutes.

It carries out the reaction Hydrolysis of Ala-|-Gly bond in repressor LexA.. In terms of biological role, represses dinA, dinB, dinC, recA genes and itself by binding to the 14 bp palindromic sequence 5'-CGAACNNNNGTTCG-3'; some genes have a tandem consensus sequence and their binding is cooperative. In the presence of single-stranded DNA, RecA interacts with LexA causing an autocatalytic cleavage which disrupts the DNA-binding part of LexA, leading to derepression of the SOS regulon and eventually DNA repair; autocleavage is maximal at pH 11 in the absence of RecA and ssDNA. This Bacillus subtilis (strain 168) protein is LexA repressor.